The chain runs to 425 residues: Dihydroorotase (425 aa).

Zn(2+) contacts are provided by His61 and His63. Substrate contacts are provided by residues 63–65 (HLR) and Asn95. Positions 146, 175, 224, and 293 each coordinate Zn(2+). At Lys146 the chain carries N6-carboxylysine. Asp293 is an active-site residue. Substrate contacts are provided by residues His297 and 311–312 (PG).

The protein belongs to the metallo-dependent hydrolases superfamily. DHOase family. Class I DHOase subfamily. Zn(2+) serves as cofactor.

It catalyses the reaction (S)-dihydroorotate + H2O = N-carbamoyl-L-aspartate + H(+). Its pathway is pyrimidine metabolism; UMP biosynthesis via de novo pathway; (S)-dihydroorotate from bicarbonate: step 3/3. Catalyzes the reversible cyclization of carbamoyl aspartate to dihydroorotate. The polypeptide is Dihydroorotase (Aeropyrum pernix (strain ATCC 700893 / DSM 11879 / JCM 9820 / NBRC 100138 / K1)).